The sequence spans 443 residues: Proline--tRNA ligase (443 aa).

It belongs to the class-II aminoacyl-tRNA synthetase family. ProS type 2 subfamily. Homodimer.

It is found in the cytoplasm. The enzyme catalyses tRNA(Pro) + L-proline + ATP = L-prolyl-tRNA(Pro) + AMP + diphosphate. Functionally, catalyzes the attachment of proline to tRNA(Pro) in a two-step reaction: proline is first activated by ATP to form Pro-AMP and then transferred to the acceptor end of tRNA(Pro). This chain is Proline--tRNA ligase, found in Zymomonas mobilis subsp. mobilis (strain ATCC 31821 / ZM4 / CP4).